The chain runs to 134 residues: Large ribosomal subunit protein bL20 (134 aa).

This sequence belongs to the bacterial ribosomal protein bL20 family.

In terms of biological role, binds directly to 23S ribosomal RNA and is necessary for the in vitro assembly process of the 50S ribosomal subunit. It is not involved in the protein synthesizing functions of that subunit. The polypeptide is Large ribosomal subunit protein bL20 (Rhizobium rhizogenes (strain K84 / ATCC BAA-868) (Agrobacterium radiobacter)).